The primary structure comprises 530 residues: Ubiquitin carboxyl-terminal hydrolase 17 (530 aa).

One can recognise a USP domain in the interval 80-375; sequence AGLQNMGNTC…QAYVLFYIQK (296 aa). The Nucleophile role is filled by cysteine 89. Histidine 334 serves as the catalytic Proton acceptor. 2 stretches are compositionally biased toward basic and acidic residues: residues 382-392 and 398-413; these read SESVSRGREPR and DTDRRATQGELKRDHP. Disordered regions lie at residues 382–416 and 490–530; these read SESVSRGREPRALGAEDTDRRATQGELKRDHPCLQ and SSTT…LVCQ. Residues 399–530 form a mediates interaction with SUDS3 region; that stretch reads TDRRATQGEL…HSKRALLVCQ (132 aa). Over residues 498–510 the composition is skewed to polar residues; that stretch reads ESVNTGTLASLQG. Positions 511 to 524 are enriched in basic residues; it reads RTRRSKGKNKHSKR.

It belongs to the peptidase C19 family. USP17 subfamily. As to quaternary structure, interacts with SUDS3; the interaction is direct. As to expression, broadly expressed.

It localises to the nucleus. The protein localises to the endoplasmic reticulum. It catalyses the reaction Thiol-dependent hydrolysis of ester, thioester, amide, peptide and isopeptide bonds formed by the C-terminal Gly of ubiquitin (a 76-residue protein attached to proteins as an intracellular targeting signal).. Deubiquitinating enzyme that removes conjugated ubiquitin from specific proteins to regulate different cellular processes. Regulates cell proliferation by deubiquitinating and inhibiting RCE1 thereby controlling the small GTPases NRAS and HRAS localization and activation. In parallel, mediates deubiquitination of CDC25A, preventing CDC25A degradation by the proteasome during the G1/S and G2/M phases promoting cell-cycle progression. Also regulates cell proliferation and apoptosis through deubiquitination of SUDS3 a regulator of histone deacetylation. Through activation of the Rho family GTPases RAC1A, CDC42 and RHOA, regulates cell migration. Through the cleavage of 'Lys-48'- and 'Lys-63'-linked polyubiquitin chains of the cytoplasmic innate immune receptors RIGI and IFIH1 stimulates the cellular response to viral infection. In Homo sapiens (Human), this protein is Ubiquitin carboxyl-terminal hydrolase 17 (USP17L2).